The sequence spans 226 residues: Brachyurin (226 aa).

The Peptidase S1 domain maps to 1–223 (IVGGVEAVPN…FLDWIQTQTG (223 aa)). An intrachain disulfide couples Cys26 to Cys42. Active-site charge relay system residues include His41 and Asp87. Intrachain disulfides connect Cys151/Cys164 and Cys174/Cys200. The active-site Charge relay system is Ser178.

Belongs to the peptidase S1 family.

The enzyme catalyses Hydrolysis of proteins, with broad specificity for peptide bonds. Native collagen is cleaved about 75% of the length of the molecule from the N-terminus. Low activity on small molecule substrates of both trypsin and chymotrypsin.. Its function is as follows. This enzyme is a serine protease capable of degrading the native triple helix of collagen. The sequence is that of Brachyurin from Leptuca pugilator (Atlantic sand fiddler crab).